Consider the following 248-residue polypeptide: 2,3-bisphosphoglycerate-dependent phosphoglycerate mutase (248 aa).

Substrate contacts are provided by residues 8–15 (RHGESVWN), 21–22 (TG), R60, 87–90 (ERHY), K98, 114–115 (RR), and 183–184 (GN). The Tele-phosphohistidine intermediate role is filled by H9. Residue E87 is the Proton donor/acceptor of the active site.

The protein belongs to the phosphoglycerate mutase family. BPG-dependent PGAM subfamily.

It catalyses the reaction (2R)-2-phosphoglycerate = (2R)-3-phosphoglycerate. It functions in the pathway carbohydrate degradation; glycolysis; pyruvate from D-glyceraldehyde 3-phosphate: step 3/5. Its function is as follows. Catalyzes the interconversion of 2-phosphoglycerate and 3-phosphoglycerate. In Brachyspira hyodysenteriae (strain ATCC 49526 / WA1), this protein is 2,3-bisphosphoglycerate-dependent phosphoglycerate mutase.